A 114-amino-acid polypeptide reads, in one-letter code: Large ribosomal subunit protein bL19 (114 aa).

The protein belongs to the bacterial ribosomal protein bL19 family.

This protein is located at the 30S-50S ribosomal subunit interface and may play a role in the structure and function of the aminoacyl-tRNA binding site. This Bacillus mycoides (strain KBAB4) (Bacillus weihenstephanensis) protein is Large ribosomal subunit protein bL19.